A 63-amino-acid chain; its full sequence is uncharacterized protein (63 aa).

This is an uncharacterized protein from Bdellovibrio bacteriovorus (Bacteriophage phiMH2K).